We begin with the raw amino-acid sequence, 462 residues long: 3-deoxy-D-manno-octulosonic acid transferase (462 aa).

Residues 2-22 (MLLYYILSFILLPVYFIIIFI) traverse the membrane as a helical; Signal-anchor segment. One can recognise an RPE1 insert domain in the interval 47–90 (SLLDLQMSVNQEGFKVDTEHKATSYVYIHRNASLMYKLSLERSY). E104 serves as the catalytic Proton acceptor. Residues 308–309 (PR), 349–351 (FGE), and 374–377 (NILE) each bind CMP.

This sequence belongs to the glycosyltransferase group 1 family.

The protein resides in the cell inner membrane. The enzyme catalyses lipid IVA (E. coli) + CMP-3-deoxy-beta-D-manno-octulosonate = alpha-Kdo-(2-&gt;6)-lipid IVA (E. coli) + CMP + H(+). It participates in bacterial outer membrane biogenesis; LPS core biosynthesis. Involved in lipopolysaccharide (LPS) biosynthesis. Catalyzes the transfer of 3-deoxy-D-manno-octulosonate (Kdo) residue(s) from CMP-Kdo to lipid IV(A), the tetraacyldisaccharide-1,4'-bisphosphate precursor of lipid A. The sequence is that of 3-deoxy-D-manno-octulosonic acid transferase (waaA) from Rickettsia typhi (strain ATCC VR-144 / Wilmington).